We begin with the raw amino-acid sequence, 193 residues long: Segregation and condensation protein B (193 aa).

Belongs to the ScpB family. In terms of assembly, homodimer. Homodimerization may be required to stabilize the binding of ScpA to the Smc head domains. Component of a cohesin-like complex composed of ScpA, ScpB and the Smc homodimer, in which ScpA and ScpB bind to the head domain of Smc. The presence of the three proteins is required for the association of the complex with DNA.

It is found in the cytoplasm. Functionally, participates in chromosomal partition during cell division. May act via the formation of a condensin-like complex containing Smc and ScpA that pull DNA away from mid-cell into both cell halves. The chain is Segregation and condensation protein B from Streptococcus thermophilus (strain CNRZ 1066).